The sequence spans 166 residues: NAD(P)H-quinone oxidoreductase subunit I, chloroplastic (166 aa).

4Fe-4S ferredoxin-type domains are found at residues 55-84 (GRIHFEFDKCIACEVCVRVCPIDLPVVDWK) and 95-124 (LNYSIDFGVCIFCGNCVEYCPTNCLSMTEE). The [4Fe-4S] cluster site is built by Cys-64, Cys-67, Cys-70, Cys-74, Cys-104, Cys-107, Cys-110, and Cys-114.

It belongs to the complex I 23 kDa subunit family. NDH is composed of at least 16 different subunits, 5 of which are encoded in the nucleus. [4Fe-4S] cluster serves as cofactor.

The protein resides in the plastid. The protein localises to the chloroplast thylakoid membrane. It carries out the reaction a plastoquinone + NADH + (n+1) H(+)(in) = a plastoquinol + NAD(+) + n H(+)(out). The catalysed reaction is a plastoquinone + NADPH + (n+1) H(+)(in) = a plastoquinol + NADP(+) + n H(+)(out). In terms of biological role, NDH shuttles electrons from NAD(P)H:plastoquinone, via FMN and iron-sulfur (Fe-S) centers, to quinones in the photosynthetic chain and possibly in a chloroplast respiratory chain. The immediate electron acceptor for the enzyme in this species is believed to be plastoquinone. Couples the redox reaction to proton translocation, and thus conserves the redox energy in a proton gradient. In Enydra sessilis (Smallray swampwort), this protein is NAD(P)H-quinone oxidoreductase subunit I, chloroplastic.